The chain runs to 338 residues: MQVYYDKDCDLSIIQGKKVAVIGYGSQGHAHACNLNDSGVDVTVGLRPGSSSIAKAEAHGLKVSDVPAAVAAADVVMILTPDEFQSQLYKNEIEPNLKEGATLAFAHGFAIHYNQVVPRKDLDVIMIAPKAPGHTVRSEFVKGGGIPDLVAIFQDASGNAKDVALSYACGVGGGRTGIIETTFKDETETDLFGEQAVLCGGAVELVKMGFETLTEAGYAPEMAYFECLHELKLIVDLMYEGGIANMNYSISNNAEFGEYVTGPRVINEESRKAMRQALKDIQDGEYAKNFILEGQTNYPSMTAHRRNNAAHPIEQVGEKLRAMMPWIESNKIIDKSKN.

A KARI N-terminal Rossmann domain is found at 1-181; sequence MQVYYDKDCD…GGGRTGIIET (181 aa). Residues 24–27, Arg47, Ser50, Ser52, and 82–85 each bind NADP(+); these read YGSQ and DEFQ. His107 is an active-site residue. Residue Gly133 participates in NADP(+) binding. One can recognise a KARI C-terminal knotted domain in the interval 182–327; it reads TFKDETETDL…EKLRAMMPWI (146 aa). Mg(2+)-binding residues include Asp190, Glu194, Glu226, and Glu230. Residue Ser251 participates in substrate binding.

This sequence belongs to the ketol-acid reductoisomerase family. Requires Mg(2+) as cofactor.

It carries out the reaction (2R)-2,3-dihydroxy-3-methylbutanoate + NADP(+) = (2S)-2-acetolactate + NADPH + H(+). It catalyses the reaction (2R,3R)-2,3-dihydroxy-3-methylpentanoate + NADP(+) = (S)-2-ethyl-2-hydroxy-3-oxobutanoate + NADPH + H(+). Its pathway is amino-acid biosynthesis; L-isoleucine biosynthesis; L-isoleucine from 2-oxobutanoate: step 2/4. The protein operates within amino-acid biosynthesis; L-valine biosynthesis; L-valine from pyruvate: step 2/4. In terms of biological role, involved in the biosynthesis of branched-chain amino acids (BCAA). Catalyzes an alkyl-migration followed by a ketol-acid reduction of (S)-2-acetolactate (S2AL) to yield (R)-2,3-dihydroxy-isovalerate. In the isomerase reaction, S2AL is rearranged via a Mg-dependent methyl migration to produce 3-hydroxy-3-methyl-2-ketobutyrate (HMKB). In the reductase reaction, this 2-ketoacid undergoes a metal-dependent reduction by NADPH to yield (R)-2,3-dihydroxy-isovalerate. The polypeptide is Ketol-acid reductoisomerase (NADP(+)) (Teredinibacter turnerae (strain ATCC 39867 / T7901)).